Here is a 424-residue protein sequence, read N- to C-terminus: Serine--tRNA ligase (424 aa).

Position 230–232 (230–232 (TAE)) interacts with L-serine. 261–263 (RSE) contacts ATP. Residue E284 participates in L-serine binding. Residue 348–351 (EISS) coordinates ATP. S384 contributes to the L-serine binding site.

This sequence belongs to the class-II aminoacyl-tRNA synthetase family. Type-1 seryl-tRNA synthetase subfamily. As to quaternary structure, homodimer. The tRNA molecule binds across the dimer.

It localises to the cytoplasm. The catalysed reaction is tRNA(Ser) + L-serine + ATP = L-seryl-tRNA(Ser) + AMP + diphosphate + H(+). It catalyses the reaction tRNA(Sec) + L-serine + ATP = L-seryl-tRNA(Sec) + AMP + diphosphate + H(+). The protein operates within aminoacyl-tRNA biosynthesis; selenocysteinyl-tRNA(Sec) biosynthesis; L-seryl-tRNA(Sec) from L-serine and tRNA(Sec): step 1/1. Its function is as follows. Catalyzes the attachment of serine to tRNA(Ser). Is also able to aminoacylate tRNA(Sec) with serine, to form the misacylated tRNA L-seryl-tRNA(Sec), which will be further converted into selenocysteinyl-tRNA(Sec). This chain is Serine--tRNA ligase, found in Streptococcus pneumoniae (strain JJA).